The primary structure comprises 308 residues: MIDRFGRPLEDLRITLTHVCNFECFFCHMEGEEGDNYILSKEDILLVAKVAKNFDINSVKLTGGEPTLRRDLVEIVRGLKQLGYRDVSMTTNGFLLKDLAYKLKLAGLDRINVSLHAISRETFKKITGVDAFDRVIEGIKSAIDVGLVPVKLNFVVNRRNREEVFKFIELSQNLGVNEIHLIELHPVGLGKLAFKEHDDLREIEEYIEKISIKKQIRKKHFRPRYVLPSGLIVEVIKPYANPIFCAGCNRIRLSVDGKLKTCLYREDNVIDILDILKGEYSEDVKEELLGRAFMIAIAIREPNFKYKI.

The 221-residue stretch at 4–224 folds into the Radical SAM core domain; that stretch reads RFGRPLEDLR…QIRKKHFRPR (221 aa). Arginine 13 is a binding site for GTP. Cysteine 20, cysteine 24, and cysteine 27 together coordinate [4Fe-4S] cluster. Position 60 (lysine 60) interacts with GTP. Glycine 64 lines the S-adenosyl-L-methionine pocket. Residue threonine 90 participates in GTP binding. Serine 114 serves as a coordination point for S-adenosyl-L-methionine. Lysine 151 is a GTP binding site. The [4Fe-4S] cluster site is built by cysteine 245 and cysteine 248. Position 250–252 (250–252) interacts with GTP; that stretch reads RIR. Cysteine 262 contacts [4Fe-4S] cluster.

This sequence belongs to the radical SAM superfamily. MoaA family. The cofactor is [4Fe-4S] cluster.

The catalysed reaction is GTP + AH2 + S-adenosyl-L-methionine = (8S)-3',8-cyclo-7,8-dihydroguanosine 5'-triphosphate + 5'-deoxyadenosine + L-methionine + A + H(+). The protein operates within cofactor biosynthesis; molybdopterin biosynthesis. Its function is as follows. Catalyzes the cyclization of GTP to (8S)-3',8-cyclo-7,8-dihydroguanosine 5'-triphosphate. This Saccharolobus islandicus (strain L.S.2.15 / Lassen #1) (Sulfolobus islandicus) protein is Probable GTP 3',8-cyclase.